We begin with the raw amino-acid sequence, 205 residues long: Protease (205 aa).

Catalysis depends on residues histidine 55, aspartate 72, and cysteine 122.

It belongs to the peptidase C5 family. Interacts with protease cofactor pVI-C; this interaction is necessary for protease activation.

It is found in the virion. It localises to the host nucleus. It catalyses the reaction Cleaves proteins of the adenovirus and its host cell at two consensus sites: -Yaa-Xaa-Gly-Gly-|-Xaa- and -Yaa-Xaa-Gly-Xaa-|-Gly- (in which Yaa is Met, Ile or Leu, and Xaa is any amino acid).. Its activity is regulated as follows. Requires DNA and protease cofactor for maximal activation. Inside nascent virions, becomes partially activated by binding to the viral DNA, allowing it to cleave the cofactor that binds to the protease and fully activates it. Actin, like the viral protease cofactor, seems to act as a cofactor in the cleavage of cytokeratin 18 and of actin itself. Its function is as follows. Cleaves viral precursor proteins (pTP, pIIIa, pVI, pVII, pVIII, and pX) inside newly assembled particles giving rise to mature virions. Protease complexed to its cofactor slides along the viral DNA to specifically locate and cleave the viral precursors. Mature virions have a weakened organization compared to the unmature virions, thereby facilitating subsequent uncoating. Without maturation, the particle lacks infectivity and is unable to uncoat. Late in adenovirus infection, in the cytoplasm, may participate in the cytoskeleton destruction. Cleaves host cell cytoskeletal keratins K7 and K18. The sequence is that of Protease from Galliformes (FAdV-8).